The primary structure comprises 217 residues: MSKISSDQVRSIVSQLFKEAQESKRGFLETVELQINLKNYDTKKDKRFSGQIKIGTVTKPKLSVCVFADQQHCDEATKIGAEFMDIEALKKIGPKNKKAIKKLSKKYDAFLASESILRQVPKLLGPGLNKVGKFPTLLTHSEDMASKINDVKSTVKFQLKKVLCLAVAVGHIELTEREVATNIIQSINFLVSLLKKGWQNIKTLYVKTSMGPSHRVY.

An N6,N6-dimethyllysine; alternate modification is found at Lys122. An N6-methyllysine; alternate modification is found at Lys122.

Belongs to the universal ribosomal protein uL1 family.

This is Large ribosomal subunit protein uL1 (rpl10a) from Dictyostelium discoideum (Social amoeba).